A 159-amino-acid polypeptide reads, in one-letter code: Growth arrest and DNA damage-inducible protein GADD45 gamma (159 aa).

Residues 43-86 (VYESAKVLNVDPDNVTFCVLAADEEDEGDIALQIHFTLIQAFCC) form a homodimerization region.

This sequence belongs to the GADD45 family. Undergoes concentration-dependent homodimerization, which is required for growth inhibititory activity and enhances interaction with PCNA. Interacts with GADD45GIP1. Interacts with PCNA.

In terms of biological role, involved in the regulation of growth and apoptosis. Mediates activation of stress-responsive MTK1/MEKK4 MAPKKK. This is Growth arrest and DNA damage-inducible protein GADD45 gamma (Gadd45g) from Mus musculus (Mouse).